The sequence spans 231 residues: Flagellar L-ring protein (231 aa).

A signal peptide spans 1–18 (MKHLLSVFALGGAVLLAG). A lipid anchor (N-palmitoyl cysteine) is attached at cysteine 19. Cysteine 19 carries S-diacylglycerol cysteine lipidation.

The protein belongs to the FlgH family. The basal body constitutes a major portion of the flagellar organelle and consists of four rings (L,P,S, and M) mounted on a central rod.

Its subcellular location is the cell outer membrane. It localises to the bacterial flagellum basal body. Assembles around the rod to form the L-ring and probably protects the motor/basal body from shearing forces during rotation. This Pseudomonas entomophila (strain L48) protein is Flagellar L-ring protein.